A 233-amino-acid polypeptide reads, in one-letter code: Probable septum site-determining protein MinC (233 aa).

A disordered region spans residues 98–123; the sequence is LTEGKEKAPRPAPSEPTPPPPPVANQ. Residues 107 to 120 are compositionally biased toward pro residues; the sequence is RPAPSEPTPPPPPV.

This sequence belongs to the MinC family. Interacts with MinD and FtsZ.

Cell division inhibitor that blocks the formation of polar Z ring septums. Rapidly oscillates between the poles of the cell to destabilize FtsZ filaments that have formed before they mature into polar Z rings. Prevents FtsZ polymerization. This is Probable septum site-determining protein MinC from Klebsiella pneumoniae (strain 342).